Here is a 349-residue protein sequence, read N- to C-terminus: UDP-N-acetylenolpyruvoylglucosamine reductase (349 aa).

In terms of domain architecture, FAD-binding PCMH-type spans 25 to 197 (GIAATARYAA…VAVTFRLPKR (173 aa)). Residue R173 is part of the active site. The active-site Proton donor is S249. The active site involves E345.

This sequence belongs to the MurB family. The cofactor is FAD.

It is found in the cytoplasm. The enzyme catalyses UDP-N-acetyl-alpha-D-muramate + NADP(+) = UDP-N-acetyl-3-O-(1-carboxyvinyl)-alpha-D-glucosamine + NADPH + H(+). The protein operates within cell wall biogenesis; peptidoglycan biosynthesis. Functionally, cell wall formation. The sequence is that of UDP-N-acetylenolpyruvoylglucosamine reductase from Burkholderia vietnamiensis (strain G4 / LMG 22486) (Burkholderia cepacia (strain R1808)).